We begin with the raw amino-acid sequence, 436 residues long: Eukaryotic translation initiation factor 4B (436 aa).

The segment at 56–98 is disordered; sequence AKNNSNNTRSGGFGGSFGGRSRLDPALGGGSSDRREEYPVPDA. Phosphoserine is present on residues Ser65 and Ser71. Positions 101–183 constitute an RRM domain; sequence YRAVINNIPW…RTVYVSVAAP (83 aa). The tract at residues 185–406 is disordered; sequence RGGGADVDWS…EKQNGDAKEN (222 aa). One copy of the 1; approximate repeat lies at 190 to 210; it reads DVDWSSARGSNFQGDGREDAP. The 7 X approximate tandem repeats stretch occupies residues 190–350; sequence DVDWSSARGS…DWGAARGAQF (161 aa). 5 repeat units span residues 211–232, 233–258, 259–284, 285–310, and 311–340. Basic and acidic residues predominate over residues 329 to 338; the sequence is PRREREKEEP. The 7; truncated repeat unit spans residues 341-350; that stretch reads DWGAARGAQF. Basic and acidic residues-rich tracts occupy residues 359 to 376 and 397 to 406; these read TYKD…EQPK and EKQNGDAKEN.

In terms of biological role, involved in translation initiation. May be the homolog of mammalian eIF4B and be part of an RNA helicase. STM1/TIF3 is a non-essential gene. The sequence is that of Eukaryotic translation initiation factor 4B (TIF3) from Saccharomyces cerevisiae (strain ATCC 204508 / S288c) (Baker's yeast).